The primary structure comprises 350 residues: uncharacterized protein (350 aa).

5 residues coordinate Mn(2+): aspartate 214, aspartate 225, histidine 289, glutamate 318, and glutamate 332.

The protein belongs to the peptidase M24B family. It depends on Mn(2+) as a cofactor.

This is an uncharacterized protein from Staphylococcus saprophyticus subsp. saprophyticus (strain ATCC 15305 / DSM 20229 / NCIMB 8711 / NCTC 7292 / S-41).